A 179-amino-acid polypeptide reads, in one-letter code: Endoribonuclease YbeY (179 aa).

Zn(2+) is bound by residues His-148, His-152, and His-158.

It belongs to the endoribonuclease YbeY family. Zn(2+) serves as cofactor.

The protein localises to the cytoplasm. In terms of biological role, single strand-specific metallo-endoribonuclease involved in late-stage 70S ribosome quality control and in maturation of the 3' terminus of the 16S rRNA. The polypeptide is Endoribonuclease YbeY (Prochlorococcus marinus (strain MIT 9312)).